The following is a 417-amino-acid chain: Serine/threonine-protein phosphatase 4 regulatory subunit 2 (417 aa).

Polar residues-rich tracts occupy residues 140–149 (EKNNSNSLNR), 158–170 (NSPS…NING), and 186–196 (APMTTNGLPES). The tract at residues 140–417 (EKNNSNSLNR…EVTDEPMEQD (278 aa)) is disordered. The residue at position 159 (Ser159) is a Phosphoserine. Positions 197-213 (TDSKEANLQQNEEKNHS) are enriched in basic and acidic residues. Residues 214–226 (DSSTSESEVSSVS) are compositionally biased toward low complexity. Ser226 carries the phosphoserine modification. The span at 231–258 (KHPDEDAVEAEGHEVKRLRFDKEGEVRE) shows a compositional bias: basic and acidic residues. Positions 259–269 (TASQTTSSEIS) are enriched in polar residues. Residues 283-297 (QDKDKDSRCTRQHCT) are compositionally biased toward basic and acidic residues. Residues 298 to 311 (EEDEEEDEEEEEES) are compositionally biased toward acidic residues. Over residues 318-327 (MIPERKNQEK) the composition is skewed to basic and acidic residues. A compositionally biased stretch (acidic residues) spans 338 to 350 (ETSEENNQMEESD). The segment covering 353 to 363 (QAEKDLLHSEG) has biased composition (basic and acidic residues). Positions 366-375 (NEGPVSSSSS) are enriched in low complexity. Positions 385 to 399 (GSNSSKTGEILSESS) are enriched in polar residues. Residues 400–417 (MENDDEATEVTDEPMEQD) are compositionally biased toward acidic residues.

This sequence belongs to the PPP4R2 family. Serine/threonine-protein phosphatase 4 (PP4) occurs in different assemblies of the catalytic and one or more regulatory subunits. Component of the PP4 complexes PPP4C-PPP4R2, PPP4C-PPP4R2-PPP4R3A and PPP4C-PPP4R2-PPP4R3B. The PPP4C-PPP4R2 complex appears to be a tetramer composed of 2 molecules of PPP4C and 2 molecules of PPP4R2. Interacts with DDX20/GEMIN3 and GEMIN4. Interacts with RPA2; this DNA damage-dependent interaction recruits PPP4C leading to RPA2 dephosphorylation. In terms of tissue distribution, widely expressed.

Its subcellular location is the cytoplasm. It is found in the cytoskeleton. The protein localises to the microtubule organizing center. It localises to the centrosome. The protein resides in the nucleus. Functionally, regulatory subunit of serine/threonine-protein phosphatase 4 (PP4). May regulate the activity of PPP4C at centrosomal microtubule organizing centers. Its interaction with the SMN complex leads to enhance the temporal localization of snRNPs, suggesting a role of PPP4C in maturation of spliceosomal snRNPs. The PPP4C-PPP4R2-PPP4R3A PP4 complex specifically dephosphorylates H2AX phosphorylated on 'Ser-140' (gamma-H2AX) generated during DNA replication and required for DNA double strand break repair. Mediates RPA2 dephosphorylation by recruiting PPP4C to RPA2 in a DNA damage-dependent manner. RPA2 dephosphorylation is required for the efficient RPA2-mediated recruitment of RAD51 to chromatin following double strand breaks, an essential step for DNA repair. The sequence is that of Serine/threonine-protein phosphatase 4 regulatory subunit 2 (PPP4R2) from Homo sapiens (Human).